We begin with the raw amino-acid sequence, 223 residues long: Ribosome assembly factor mrt4 (223 aa).

It belongs to the universal ribosomal protein uL10 family. Associates with the pre-60S ribosomal particle.

It is found in the nucleus. The protein localises to the nucleolus. The protein resides in the cytoplasm. Its function is as follows. Component of the ribosome assembly machinery. Nuclear paralog of the ribosomal protein P0, it binds pre-60S subunits at an early stage of assembly in the nucleolus, and is replaced by P0 in cytoplasmic pre-60S subunits and mature 80S ribosomes. In Dictyostelium discoideum (Social amoeba), this protein is Ribosome assembly factor mrt4.